Reading from the N-terminus, the 347-residue chain is Endophilin-A3 (347 aa).

The interval 1–21 is membrane-binding amphipathic helix; that stretch reads MSVAGLKKQFHKASQLFSEKI. In terms of domain architecture, BAR spans 18-249; sequence SEKISGAEGT…LQMRISAASS (232 aa). Residues 60 to 87 form a required for dimerization upon membrane association region; the sequence is PNPAYRAKLGMLNTVSKIRGQVKTTGYP. Positions 181–201 form a coiled coil; that stretch reads EEVRQAVEKFEESKELAERSM. Positions 218–254 are interaction with ARC; it reads FIEAALDYHRQSTEILQELQSKLQMRISAASSVPRRE. The tract at residues 248–271 is disordered; sequence SSVPRREYKPRPVKRSSSELNGVS. Ser265 bears the Phosphoserine mark. The 60-residue stretch at 285–344 folds into the SH3 domain; it reads MDQPCCRGLYDFEPENQGELGFKEGDIITLTNQIDENWYEGMIHGESGFFPINYVEVIVP.

The protein belongs to the endophilin family. In terms of assembly, interacts with ARC. Interacts with DNM1, SGIP1 and SYNJ1. Interacts with the huntingtin exon 1 protein (HDEX1P) containing a glutamine repeat in the pathological range and promotes formation of insoluble polyglutamine-containing aggregates in vivo. Interacts with DYDC1. Interacts with FASLG. Interacts with ATXN2. Interacts with BIN2. As to expression, brain and testis.

The protein resides in the cytoplasm. Its subcellular location is the early endosome membrane. In terms of biological role, implicated in endocytosis. May recruit other proteins to membranes with high curvature. This chain is Endophilin-A3 (SH3GL3), found in Homo sapiens (Human).